The following is a 447-amino-acid chain: MKKQYFGTDGIRGEVGKFPIVPEFMTRLGYAAGKVLTKDAKPHERCKVLIGKDTRVSGYLLEAALEAGFAAAGVDVMLCGPIPTPGVAYLTKALRLSAGVVISASHNPYQDNGIKFFSAKGDKLSDDFELAIEAELENPIGCVSSKELGKAFRLDDAAGRYIEFCKSTFPGDLNLKGLKLVVDCANGAAYHTAPHVFHELGAEVISIGVSPDGRNINDGCGATAPAALIAKVKEEGADLGIALDGDADRLQMVDSTGRLFNGDELLYVLAKDRIDRGQQLGGVIGTLMTNLAIENAIKGLGIGFERANVGDRYVLELLKQKGWLIGGEGSGHLLCLDQHSTGDGTIAALQVLAAMSQNKKSLSELLNTVKIFPQVLLNVKLKPSYDWKSDEVLNKQITKVEADLKDAGRVLIRASGTEPLLRVMVETQSADVAMNAAKSIADLVPTP.

Ser-105 (phosphoserine intermediate) is an active-site residue. The Mg(2+) site is built by Ser-105, Asp-244, Asp-246, and Asp-248. Ser-105 bears the Phosphoserine mark.

The protein belongs to the phosphohexose mutase family. It depends on Mg(2+) as a cofactor. Activated by phosphorylation.

The catalysed reaction is alpha-D-glucosamine 1-phosphate = D-glucosamine 6-phosphate. Functionally, catalyzes the conversion of glucosamine-6-phosphate to glucosamine-1-phosphate. In Polynucleobacter asymbioticus (strain DSM 18221 / CIP 109841 / QLW-P1DMWA-1) (Polynucleobacter necessarius subsp. asymbioticus), this protein is Phosphoglucosamine mutase.